Here is a 493-residue protein sequence, read N- to C-terminus: Cholesteryl ester transfer protein (493 aa).

Positions 1–17 (MLAATVLTLALLGNVHA) are cleaved as a signal peptide. N-linked (GlcNAc...) asparagine glycans are attached at residues asparagine 59 and asparagine 105. Cysteine 160 and cysteine 201 are joined by a disulfide. N-linked (GlcNAc...) asparagine glycosylation is found at asparagine 257, asparagine 358, and asparagine 413.

It belongs to the BPI/LBP/Plunc superfamily. BPI/LBP family. Probably primarily expressed in liver and adipose tissues. Detected in adrenal gland, mesenteric fat, spleen and aorta.

It is found in the secreted. It carries out the reaction cholesteryl (9Z-octadecenoate)(in) = cholesteryl (9Z-octadecenoate)(out). It catalyses the reaction 1,2,3-tri-(9Z-octadecenoyl)-glycerol(in) = 1,2,3-tri-(9Z-octadecenoyl)-glycerol(out). The catalysed reaction is cholesteryl (9Z,12Z)-octadecadienoate(in) = cholesteryl (9Z,12Z)-octadecadienoate(out). In terms of biological role, involved in the transfer of neutral lipids, including cholesteryl ester and triglyceride, among lipoprotein particles. Allows the net movement of cholesteryl ester from high density lipoproteins/HDL to triglyceride-rich very low density lipoproteins/VLDL, and the equimolar transport of triglyceride from VLDL to HDL. Regulates the reverse cholesterol transport, by which excess cholesterol is removed from peripheral tissues and returned to the liver for elimination. The chain is Cholesteryl ester transfer protein from Macaca fascicularis (Crab-eating macaque).